The sequence spans 381 residues: Protein COS8 (381 aa).

The Extracellular segment spans residues Met1 to Glu42. Residues Ile43–Trp63 traverse the membrane as a helical segment. The Cytoplasmic segment spans residues Lys64–Pro72. Residues Leu73–Leu93 form a helical membrane-spanning segment. Over Ser94–Arg237 the chain is Extracellular. The helical transmembrane segment at Cys238–Ile258 threads the bilayer. Topologically, residues Ser259–Lys381 are cytoplasmic.

Belongs to the DUP/COS family.

It localises to the membrane. The chain is Protein COS8 (COS8) from Saccharomyces cerevisiae (strain ATCC 204508 / S288c) (Baker's yeast).